The primary structure comprises 274 residues: MSSLIKEIEEAWQIKGQLLQDSSKLIMLKKTLNDVIASLNQGAIRVCEKKENSWEVNEWVKKAILLYFITTESQLYNNNYNSWYDKVAPKFSVDTDENIFKEAAIRKVPGAVVRTGTYIAKNVVIMPSFINIGAYIDEGTMIDTWATIGSCAQIGKHCHISGGTGIGGVLEPLQAKPVIIEDNCFIGARSEIAEGVIVEEGAVISMGVFIGSSTKIIYRDTGEIIYGRIPAYSVVVPGVLPAKEAGKPGLYCAVIIKQVDKTTRSKVSINDLLR.

Substrate-binding residues include Arg106 and Asp143.

It belongs to the transferase hexapeptide repeat family. In terms of assembly, homotrimer.

The protein resides in the cytoplasm. It catalyses the reaction (S)-2,3,4,5-tetrahydrodipicolinate + succinyl-CoA + H2O = (S)-2-succinylamino-6-oxoheptanedioate + CoA. It functions in the pathway amino-acid biosynthesis; L-lysine biosynthesis via DAP pathway; LL-2,6-diaminopimelate from (S)-tetrahydrodipicolinate (succinylase route): step 1/3. The protein is 2,3,4,5-tetrahydropyridine-2,6-dicarboxylate N-succinyltransferase of Rickettsia akari (strain Hartford).